Consider the following 108-residue polypeptide: Parvalbumin beta 2 (108 aa).

A1 carries the post-translational modification N-acetylalanine. 2 EF-hand domains span residues K38–G73 and L77–G108. 11 residues coordinate Ca(2+): D51, D53, S55, F57, E59, E62, D90, D92, D94, K96, and E101.

It belongs to the parvalbumin family.

Functionally, in muscle, parvalbumin is thought to be involved in relaxation after contraction. It binds two calcium ions. The sequence is that of Parvalbumin beta 2 from Merluccius bilinearis (Silver hake).